Consider the following 261-residue polypeptide: Phosphate import ATP-binding protein PstB (261 aa).

Residues 15–256 (LQVRRLNFYY…PAHQETENYI (242 aa)) form the ABC transporter domain. ATP is bound at residue 47–54 (GPSGCGKS).

The protein belongs to the ABC transporter superfamily. Phosphate importer (TC 3.A.1.7) family. The complex is composed of two ATP-binding proteins (PstB), two transmembrane proteins (PstC and PstA) and a solute-binding protein (PstS).

Its subcellular location is the cell inner membrane. It catalyses the reaction phosphate(out) + ATP + H2O = ADP + 2 phosphate(in) + H(+). Functionally, part of the ABC transporter complex PstSACB involved in phosphate import. Responsible for energy coupling to the transport system. The polypeptide is Phosphate import ATP-binding protein PstB (Burkholderia sp).